The primary structure comprises 970 residues: UvrABC system protein A (970 aa).

34 to 41 (GVSGSGKS) is an ATP binding site. The C4-type zinc-finger motif lies at 284-311 (CPEHGAVMDELSPRLFSFNSPYGACPDC). ABC transporter domains lie at 340–617 (WSEK…QRSL) and 637–965 (GNGA…KYLA). Residue 669–676 (GVSGSGKS) coordinates ATP. The segment at 768 to 794 (CEACAGQGVNVIEMNFLPDVYVQCDVC) adopts a C4-type zinc-finger fold.

Belongs to the ABC transporter superfamily. UvrA family. Forms a heterotetramer with UvrB during the search for lesions.

The protein localises to the cytoplasm. Functionally, the UvrABC repair system catalyzes the recognition and processing of DNA lesions. UvrA is an ATPase and a DNA-binding protein. A damage recognition complex composed of 2 UvrA and 2 UvrB subunits scans DNA for abnormalities. When the presence of a lesion has been verified by UvrB, the UvrA molecules dissociate. The protein is UvrABC system protein A of Synechocystis sp. (strain ATCC 27184 / PCC 6803 / Kazusa).